Reading from the N-terminus, the 157-residue chain is MFFPTLLAVEAAEKGGLFDLDATLPLIAIQFLLLVAVLNSLFYEPVTRAIDSRNDYIRTTQAEAQERLDKAVSLTRQYESEISQARLQAQQVIAEAEAAAARIRSEKLAAVQAEIQQKLEAARLQVEQEKQAALEQLQQQVDAIAAQITQKLLGSAR.

Residues 22-42 form a helical membrane-spanning segment; sequence ATLPLIAIQFLLLVAVLNSLF.

This sequence belongs to the ATPase B chain family. As to quaternary structure, F-type ATPases have 2 components, F(1) - the catalytic core - and F(0) - the membrane proton channel. F(1) has five subunits: alpha(3), beta(3), gamma(1), delta(1), epsilon(1). F(0) has four main subunits: a(1), b(1), b'(1) and c(10-14). The alpha and beta chains form an alternating ring which encloses part of the gamma chain. F(1) is attached to F(0) by a central stalk formed by the gamma and epsilon chains, while a peripheral stalk is formed by the delta, b and b' chains.

It localises to the cellular thylakoid membrane. Its function is as follows. F(1)F(0) ATP synthase produces ATP from ADP in the presence of a proton or sodium gradient. F-type ATPases consist of two structural domains, F(1) containing the extramembraneous catalytic core and F(0) containing the membrane proton channel, linked together by a central stalk and a peripheral stalk. During catalysis, ATP synthesis in the catalytic domain of F(1) is coupled via a rotary mechanism of the central stalk subunits to proton translocation. In terms of biological role, component of the F(0) channel, it forms part of the peripheral stalk, linking F(1) to F(0). The b'-subunit is a diverged and duplicated form of b found in plants and photosynthetic bacteria. The chain is ATP synthase subunit b' from Synechococcus sp. (strain JA-2-3B'a(2-13)) (Cyanobacteria bacterium Yellowstone B-Prime).